Reading from the N-terminus, the 616-residue chain is MSEREERRFVEIPRESVRLMAESTGLELSDEVAALLAEDVCYRLREATQNSSQFMKHTKRRKLTVEDFNRALRWSSVEAVCGYGSQEALPLRPAREGDLYFPEDREVSLVELALATNIPKGCAETAVRVHVSYLDGKGNLAPQGSVPSAVSSLTDDLLKYYQQVTRAVLGDDPQLMKVALQDLQTNSKIAALLPYFVYVVSGVKSVSHDLEQLHRLLQVARSLIRNPHLCLGPYVRSLVGSVLYCVLEPLAASINPLNDHWTLRDGAALLLSHIFWTHGDLVSGLYQQILLSLQKVLTDPVRPLCSHYGAVVGLHALGWKAVERVLYPHLPTYWTNLQAVLDDYSVSNAQVKADGHKVYGAILVAVERLLKMKAQAAEPNRGGLGGRGYRPAEDLPWDSLLLQESPPGGSSETGFGSGLPPPSGVAGPEDPSSLTLADIYRELYSFFGDSLATRFGTGQPAPTAPRPPGDKKEPAAAPDSVRKMPQLTASAVVSPQGDESPCGGTLATATAASESRPLPRVHRARGAPRQQGPGAGTRDVFQKSRFAPRGAPHFRFIIAGRQAGRRCRGRLFQTAFPAPYGPSPASRYVQKLPMIGRTGRPARRWALSDYSLYLPL.

Disordered stretches follow at residues 399 to 432 (SLLL…EDPS) and 455 to 539 (FGTG…GTRD). Phosphoserine is present on residues Ser494 and Ser500. Asymmetric dimethylarginine occurs at positions 549, 555, and 587.

The protein belongs to the TAF6 family. The PCAF complex is composed of a number of TBP-associated factors (TAFS), such as TAF5, TAF5L, TAF6, TAF6L, TAF9, TAF10 and TAF12, PCAF, and also PCAF-associated factors (PAFs), such as TADA2L/ADA2, TADA3L/ADA3 and SPT3. Component of the STAGA transcription coactivator-HAT complex, at least composed of SUPT3H, GCN5L2, TAF5L, TAF6L, SUPT7L, TADA3L, TAD1L, TAF10, TAF12, TRRAP and TAF9.

It localises to the nucleus. Functions as a component of the PCAF complex. The PCAF complex is capable of efficiently acetylating histones in a nucleosomal context. The PCAF complex could be considered as the human version of the yeast SAGA complex. With TAF5L, acts as an epigenetic regulator essential for somatic reprogramming. Regulates target genes through H3K9ac deposition and MYC recruitment which trigger MYC regulatory network to orchestrate gene expression programs to control embryonic stem cell state. Functions with MYC to activate target gene expression through RNA polymerase II pause release. This Mus musculus (Mouse) protein is TAF6-like RNA polymerase II p300/CBP-associated factor-associated factor 65 kDa subunit 6L.